The chain runs to 289 residues: Mas-related G-protein coupled receptor member G (289 aa).

Topologically, residues 1-13 (MLSIFNIWGTFNR) are extracellular. The helical transmembrane segment at 14–34 (VLFFLSLTVSLAGLAGNTLLL) threads the bilayer. Residues 35 to 49 (WHLGLRIKKGPFNTY) lie on the Cytoplasmic side of the membrane. Residues 50 to 70 (LLHLAAADFLFLSCQVGFSIA) traverse the membrane as a helical segment. Residues 71-80 (KIASGYEDTL) lie on the Extracellular side of the membrane. The helical transmembrane segment at 81-101 (YFPVTFLWFAVGLWLLAAFIV) threads the bilayer. At 102-123 (DCCLSYMFPSFCGPNCRPRYTS) the chain is on the cytoplasmic side. The chain crosses the membrane as a helical span at residues 124-144 (FVLCLVIWALTMLAVLLPANA). Residues 145 to 164 (CGLLYNRMSLLVCLKYHWVS) are Extracellular-facing. Residues 165–185 (VVWLGVLASTACGASMFLLVF) traverse the membrane as a helical segment. The Cytoplasmic segment spans residues 186–200 (GNCCSSQPPSKFCKL). The chain crosses the membrane as a helical span at residues 201–221 (AQCSGILLFFCRLPLVFYWCL). A topological domain (extracellular) is located at residue Arg-222. Residues 223–243 (PVIKFLLPFFFPLATLLACID) form a helical membrane-spanning segment. Residues 244–289 (SSAKPLLYYLKGRQLRKEPLQVALNRALGEESQSSSGGISLPMSRV) are Cytoplasmic-facing.

Belongs to the G-protein coupled receptor 1 family. Mas subfamily.

Its subcellular location is the cell membrane. Its function is as follows. Orphan receptor. May regulate nociceptor function and/or development, including the sensation or modulation of pain. The protein is Mas-related G-protein coupled receptor member G (Mrgprg) of Rattus norvegicus (Rat).